Reading from the N-terminus, the 420-residue chain is Serine hydroxymethyltransferase (420 aa).

Residues Leu121 and 125–127 each bind (6S)-5,6,7,8-tetrahydrofolate; that span reads GHL. N6-(pyridoxal phosphate)lysine is present on Lys229.

Belongs to the SHMT family. As to quaternary structure, homodimer. Pyridoxal 5'-phosphate is required as a cofactor.

The protein resides in the cytoplasm. The enzyme catalyses (6R)-5,10-methylene-5,6,7,8-tetrahydrofolate + glycine + H2O = (6S)-5,6,7,8-tetrahydrofolate + L-serine. It functions in the pathway one-carbon metabolism; tetrahydrofolate interconversion. Its pathway is amino-acid biosynthesis; glycine biosynthesis; glycine from L-serine: step 1/1. In terms of biological role, catalyzes the reversible interconversion of serine and glycine with tetrahydrofolate (THF) serving as the one-carbon carrier. This reaction serves as the major source of one-carbon groups required for the biosynthesis of purines, thymidylate, methionine, and other important biomolecules. Also exhibits THF-independent aldolase activity toward beta-hydroxyamino acids, producing glycine and aldehydes, via a retro-aldol mechanism. This Streptomyces coelicolor (strain ATCC BAA-471 / A3(2) / M145) protein is Serine hydroxymethyltransferase.